A 298-amino-acid chain; its full sequence is Probable alpha-L-glutamate ligase (298 aa).

One can recognise an ATP-grasp domain in the interval 104 to 287 (MQLLSRHGIG…VAGKIIEFLE (184 aa)). Residues Lys141, 178–179 (EY), Asp187, and 211–213 (RSN) contribute to the ATP site. Positions 248, 260, and 262 each coordinate Mg(2+). Asp248, Glu260, and Asn262 together coordinate Mn(2+).

It belongs to the RimK family. Mg(2+) serves as cofactor. It depends on Mn(2+) as a cofactor.

The sequence is that of Probable alpha-L-glutamate ligase from Aeromonas salmonicida (strain A449).